Consider the following 273-residue polypeptide: Proteasome subunit beta type-10 (273 aa).

The residue at position 1 (Met-1) is an N-acetylmethionine. The propeptide at 1–39 is removed in mature form; sequence MLKPALEPRGGFSFENCQRNASLERVLPGLKVPHARKTG. The active-site Nucleophile is Thr-40. Ser-230 carries the phosphoserine modification.

This sequence belongs to the peptidase T1B family. As to quaternary structure, the 26S proteasome consists of a 20S proteasome core and two 19S regulatory subunits. The 20S proteasome core is composed of 28 subunits that are arranged in four stacked rings, resulting in a barrel-shaped structure. The two end rings are each formed by seven alpha subunits, and the two central rings are each formed by seven beta subunits. The catalytic chamber with the active sites is on the inside of the barrel. Component of the immunoproteasome, where it displaces the equivalent housekeeping subunit PSMB7. Component of the spermatoproteasome, a form of the proteasome specifically found in testis. (Microbial infection) Interacts with HIV-1 TAT protein. Autocleaved. The resulting N-terminal Thr residue of the mature subunit is responsible for the nucleophile proteolytic activity.

It localises to the cytoplasm. Its subcellular location is the nucleus. It carries out the reaction Cleavage of peptide bonds with very broad specificity.. In terms of biological role, the proteasome is a multicatalytic proteinase complex which is characterized by its ability to cleave peptides with Arg, Phe, Tyr, Leu, and Glu adjacent to the leaving group at neutral or slightly basic pH. The proteasome has an ATP-dependent proteolytic activity. This subunit is involved in antigen processing to generate class I binding peptides. This Homo sapiens (Human) protein is Proteasome subunit beta type-10 (PSMB10).